Reading from the N-terminus, the 422-residue chain is Glutamate-1-semialdehyde 2,1-aminomutase (422 aa).

Lys-258 carries the N6-(pyridoxal phosphate)lysine modification.

It belongs to the class-III pyridoxal-phosphate-dependent aminotransferase family. HemL subfamily. In terms of assembly, homodimer. The cofactor is pyridoxal 5'-phosphate.

It localises to the cytoplasm. The enzyme catalyses (S)-4-amino-5-oxopentanoate = 5-aminolevulinate. It functions in the pathway porphyrin-containing compound metabolism; protoporphyrin-IX biosynthesis; 5-aminolevulinate from L-glutamyl-tRNA(Glu): step 2/2. This chain is Glutamate-1-semialdehyde 2,1-aminomutase, found in Chlamydia trachomatis serovar D (strain ATCC VR-885 / DSM 19411 / UW-3/Cx).